We begin with the raw amino-acid sequence, 599 residues long: Elongation factor 4 (599 aa).

The tr-type G domain occupies 5–187; the sequence is DLIRNFSIVA…AIVTRLPPPK (183 aa). GTP contacts are provided by residues 17-22 and 134-137; these read DHGKST and NKID.

This sequence belongs to the TRAFAC class translation factor GTPase superfamily. Classic translation factor GTPase family. LepA subfamily.

The protein resides in the cell inner membrane. The catalysed reaction is GTP + H2O = GDP + phosphate + H(+). Its function is as follows. Required for accurate and efficient protein synthesis under certain stress conditions. May act as a fidelity factor of the translation reaction, by catalyzing a one-codon backward translocation of tRNAs on improperly translocated ribosomes. Back-translocation proceeds from a post-translocation (POST) complex to a pre-translocation (PRE) complex, thus giving elongation factor G a second chance to translocate the tRNAs correctly. Binds to ribosomes in a GTP-dependent manner. This chain is Elongation factor 4, found in Cereibacter sphaeroides (strain ATCC 17025 / ATH 2.4.3) (Rhodobacter sphaeroides).